Consider the following 438-residue polypeptide: Ribosomal protein uS12 methylthiotransferase RimO (438 aa).

The MTTase N-terminal domain occupies 1–116; sequence MNVGFISLGC…IWKEIENLLD (116 aa). The [4Fe-4S] cluster site is built by Cys-10, Cys-46, Cys-79, Cys-147, Cys-151, and Cys-154. The region spanning 133–363 is the Radical SAM core domain; the sequence is TTGSNMAYLK…MALQEKISRE (231 aa). Positions 366–435 constitute a TRAM domain; the sequence is EQKVGNVYKV…DYDLFGELYT (70 aa).

This sequence belongs to the methylthiotransferase family. RimO subfamily. The cofactor is [4Fe-4S] cluster.

The protein localises to the cytoplasm. The catalysed reaction is L-aspartate(89)-[ribosomal protein uS12]-hydrogen + (sulfur carrier)-SH + AH2 + 2 S-adenosyl-L-methionine = 3-methylsulfanyl-L-aspartate(89)-[ribosomal protein uS12]-hydrogen + (sulfur carrier)-H + 5'-deoxyadenosine + L-methionine + A + S-adenosyl-L-homocysteine + 2 H(+). Its function is as follows. Catalyzes the methylthiolation of an aspartic acid residue of ribosomal protein uS12. The sequence is that of Ribosomal protein uS12 methylthiotransferase RimO from Alkaliphilus oremlandii (strain OhILAs) (Clostridium oremlandii (strain OhILAs)).